We begin with the raw amino-acid sequence, 76 residues long: DNA-directed RNA polymerase subunit epsilon (76 aa).

The protein belongs to the RNA polymerase subunit epsilon family. In terms of assembly, RNAP is composed of a core of 2 alpha, a beta and a beta' subunit. The core is associated with a delta subunit, and at least one of epsilon or omega. When a sigma factor is associated with the core the holoenzyme is formed, which can initiate transcription.

It carries out the reaction RNA(n) + a ribonucleoside 5'-triphosphate = RNA(n+1) + diphosphate. In terms of biological role, a non-essential component of RNA polymerase (RNAP). This is DNA-directed RNA polymerase subunit epsilon from Streptococcus mutans serotype c (strain ATCC 700610 / UA159).